Consider the following 184-residue polypeptide: Shikimate kinase (184 aa).

17 to 22 (SVGKTS) provides a ligand contact to ATP. Mg(2+) is bound at residue T21. 2 residues coordinate substrate: D39 and G85.

It belongs to the shikimate kinase family. Monomer. The cofactor is Mg(2+).

It localises to the cytoplasm. It catalyses the reaction shikimate + ATP = 3-phosphoshikimate + ADP + H(+). Its pathway is metabolic intermediate biosynthesis; chorismate biosynthesis; chorismate from D-erythrose 4-phosphate and phosphoenolpyruvate: step 5/7. Functionally, catalyzes the specific phosphorylation of the 3-hydroxyl group of shikimic acid using ATP as a cosubstrate. In Chlamydia muridarum (strain MoPn / Nigg), this protein is Shikimate kinase.